The primary structure comprises 82 residues: Small ribosomal subunit protein uS17 (82 aa).

The protein belongs to the universal ribosomal protein uS17 family. As to quaternary structure, part of the 30S ribosomal subunit.

One of the primary rRNA binding proteins, it binds specifically to the 5'-end of 16S ribosomal RNA. The sequence is that of Small ribosomal subunit protein uS17 from Pelobacter propionicus (strain DSM 2379 / NBRC 103807 / OttBd1).